The following is a 501-amino-acid chain: Lysine--tRNA ligase (501 aa).

Residues Glu410 and Glu417 each coordinate Mg(2+).

The protein belongs to the class-II aminoacyl-tRNA synthetase family. In terms of assembly, homodimer. Mg(2+) serves as cofactor.

Its subcellular location is the cytoplasm. It catalyses the reaction tRNA(Lys) + L-lysine + ATP = L-lysyl-tRNA(Lys) + AMP + diphosphate. In Shewanella halifaxensis (strain HAW-EB4), this protein is Lysine--tRNA ligase.